We begin with the raw amino-acid sequence, 105 residues long: Nucleoid-associated protein Sca_0120 (105 aa).

The tract at residues 1-36 (MRGGGNMQQMMKQMQKMQKKMAEEQEKLKDEKVEGS) is disordered. The span at 7–16 (MQQMMKQMQK) shows a compositional bias: low complexity. Residues 20–34 (KMAEEQEKLKDEKVE) show a composition bias toward basic and acidic residues.

It belongs to the YbaB/EbfC family. As to quaternary structure, homodimer.

Its subcellular location is the cytoplasm. The protein localises to the nucleoid. Its function is as follows. Binds to DNA and alters its conformation. May be involved in regulation of gene expression, nucleoid organization and DNA protection. The protein is Nucleoid-associated protein Sca_0120 of Staphylococcus carnosus (strain TM300).